The following is a 144-amino-acid chain: Large ribosomal subunit protein uL16 (144 aa).

Belongs to the universal ribosomal protein uL16 family. As to quaternary structure, part of the 50S ribosomal subunit.

Functionally, binds 23S rRNA and is also seen to make contacts with the A and possibly P site tRNAs. In Bacillus mycoides (strain KBAB4) (Bacillus weihenstephanensis), this protein is Large ribosomal subunit protein uL16.